Reading from the N-terminus, the 150-residue chain is Transcriptional repressor NrdR (150 aa).

A zinc finger lies at 3-34 (CPFCNFSDSKVVDSRPDKGGAAIRRRRECESC). An ATP-cone domain is found at 49 to 139 (PLVTKRDGRR…VYRSFKDINE (91 aa)).

The protein belongs to the NrdR family. Requires Zn(2+) as cofactor.

Its function is as follows. Negatively regulates transcription of bacterial ribonucleotide reductase nrd genes and operons by binding to NrdR-boxes. The polypeptide is Transcriptional repressor NrdR (Citrifermentans bemidjiense (strain ATCC BAA-1014 / DSM 16622 / JCM 12645 / Bem) (Geobacter bemidjiensis)).